A 174-amino-acid chain; its full sequence is Negative modulator of initiation of replication (174 aa).

Belongs to the SeqA family. As to quaternary structure, homodimer. Polymerizes to form helical filaments.

It is found in the cytoplasm. In terms of biological role, negative regulator of replication initiation, which contributes to regulation of DNA replication and ensures that replication initiation occurs exactly once per chromosome per cell cycle. Binds to pairs of hemimethylated GATC sequences in the oriC region, thus preventing assembly of replication proteins and re-initiation at newly replicated origins. Repression is relieved when the region becomes fully methylated. The chain is Negative modulator of initiation of replication from Pseudoalteromonas atlantica (strain T6c / ATCC BAA-1087).